Here is a 93-residue protein sequence, read N- to C-terminus: MARSVKKGPFIDDHLMKKITKLNSENQKKPFKTWSRRSTIFPDMVGHTVMVHNGKQFTPVYINENMIGHKLGEFSPTRTFRGHVAGDKKAAKK.

This sequence belongs to the universal ribosomal protein uS19 family.

Its function is as follows. Protein S19 forms a complex with S13 that binds strongly to the 16S ribosomal RNA. In Leptospira borgpetersenii serovar Hardjo-bovis (strain JB197), this protein is Small ribosomal subunit protein uS19.